The following is a 539-amino-acid chain: D-mannonate oxidoreductase (539 aa).

39-50 (WVHFGGGNIFRG) lines the NAD(+) pocket.

Belongs to the mannitol dehydrogenase family. UxuB subfamily.

It catalyses the reaction D-mannonate + NAD(+) = keto-D-fructuronate + NADH + H(+). The protein operates within carbohydrate metabolism. In terms of biological role, catalyzes the reduction of D-fructuronate (D-FruA) to D-mannonate (D-ManA). The sequence is that of D-mannonate oxidoreductase from Thermotoga maritima (strain ATCC 43589 / DSM 3109 / JCM 10099 / NBRC 100826 / MSB8).